We begin with the raw amino-acid sequence, 562 residues long: NAD-dependent malic enzyme (562 aa).

Tyrosine 101 acts as the Proton donor in catalysis. Arginine 154 contributes to the NAD(+) binding site. Lysine 172 functions as the Proton acceptor in the catalytic mechanism. A divalent metal cation is bound by residues glutamate 243, aspartate 244, and aspartate 267. The NAD(+) site is built by aspartate 267 and asparagine 415.

Belongs to the malic enzymes family. Homotetramer. The cofactor is Mg(2+). Mn(2+) serves as cofactor.

It catalyses the reaction (S)-malate + NAD(+) = pyruvate + CO2 + NADH. The catalysed reaction is oxaloacetate + H(+) = pyruvate + CO2. This chain is NAD-dependent malic enzyme, found in Aliivibrio fischeri (strain ATCC 700601 / ES114) (Vibrio fischeri).